The primary structure comprises 451 residues: TERF1-interacting nuclear factor 2 (451 aa).

Position 2 is an N-acetylalanine (alanine 2). Residues 229-257 (NPLPKAKPGTHLPQGPSSRTHPEPLAGRH) form a disordered region. A TBM motif is present at residues 256-278 (RHFNLAPLGRRRVQSQWASTRGG). The Nuclear localization signal motif lies at 262 to 268 (PLGRRRV). At serine 295 the chain carries Phosphoserine. Glycyl lysine isopeptide (Lys-Gly) (interchain with G-Cter in SUMO2) cross-links involve residues lysine 302, lysine 306, lysine 341, and lysine 353.

In terms of assembly, monomer. Found in a complex with POT1; TERF1 and TNKS1. Component of the shelterin complex (telosome) composed of TERF1, TERF2, TINF2, TERF2IP ACD and POT1. Interacts with TERF1, TERF2 and ACD. In terms of tissue distribution, detected in heart, brain, placenta, lung, liver, skeletal muscle, kidney and pancreas.

The protein resides in the nucleus. It is found in the chromosome. It localises to the telomere. The protein localises to the nucleus matrix. Its function is as follows. Component of the shelterin complex (telosome) that is involved in the regulation of telomere length and protection. Shelterin associates with arrays of double-stranded TTAGGG repeats added by telomerase and protects chromosome ends; without its protective activity, telomeres are no longer hidden from the DNA damage surveillance and chromosome ends are inappropriately processed by DNA repair pathways. Plays a role in shelterin complex assembly. Isoform 1 may have additional role in tethering telomeres to the nuclear matrix. The polypeptide is TERF1-interacting nuclear factor 2 (TINF2) (Homo sapiens (Human)).